The sequence spans 446 residues: Tubulin alpha-1B chain (446 aa).

Gln-11 provides a ligand contact to GTP. The interval 34–55 is disordered; sequence GRLMDDSPSKHDSGSTFFSETG. Residues 35–46 are compositionally biased toward basic and acidic residues; the sequence is RLMDDSPSKHDS. 7 residues coordinate GTP: Glu-69, Ser-138, Gly-142, Thr-143, Ser-177, Asn-204, and Asn-226. A Mg(2+)-binding site is contributed by Glu-69. Residue Glu-252 is part of the active site.

Belongs to the tubulin family. In terms of assembly, dimer of alpha and beta chains. A typical microtubule is a hollow water-filled tube with an outer diameter of 25 nm and an inner diameter of 15 nM. Alpha-beta heterodimers associate head-to-tail to form protofilaments running lengthwise along the microtubule wall with the beta-tubulin subunit facing the microtubule plus end conferring a structural polarity. Microtubules usually have 13 protofilaments but different protofilament numbers can be found in some organisms and specialized cells. Requires Mg(2+) as cofactor.

The protein localises to the cytoplasm. It localises to the cytoskeleton. It catalyses the reaction GTP + H2O = GDP + phosphate + H(+). Tubulin is the major constituent of microtubules, a cylinder consisting of laterally associated linear protofilaments composed of alpha- and beta-tubulin heterodimers. Microtubules grow by the addition of GTP-tubulin dimers to the microtubule end, where a stabilizing cap forms. Below the cap, tubulin dimers are in GDP-bound state, owing to GTPase activity of alpha-tubulin. This is Tubulin alpha-1B chain (TUB-1B) from Schizophyllum commune (Split gill fungus).